The primary structure comprises 258 residues: Leucyl/phenylalanyl-tRNA--protein transferase (258 aa).

Residues 199–220 form a disordered region; the sequence is GGSDGPAPDQSIGMSSSGGVSD. Low complexity predominate over residues 209 to 220; sequence SIGMSSSGGVSD.

The protein belongs to the L/F-transferase family.

The protein resides in the cytoplasm. It carries out the reaction N-terminal L-lysyl-[protein] + L-leucyl-tRNA(Leu) = N-terminal L-leucyl-L-lysyl-[protein] + tRNA(Leu) + H(+). The enzyme catalyses N-terminal L-arginyl-[protein] + L-leucyl-tRNA(Leu) = N-terminal L-leucyl-L-arginyl-[protein] + tRNA(Leu) + H(+). It catalyses the reaction L-phenylalanyl-tRNA(Phe) + an N-terminal L-alpha-aminoacyl-[protein] = an N-terminal L-phenylalanyl-L-alpha-aminoacyl-[protein] + tRNA(Phe). In terms of biological role, functions in the N-end rule pathway of protein degradation where it conjugates Leu, Phe and, less efficiently, Met from aminoacyl-tRNAs to the N-termini of proteins containing an N-terminal arginine or lysine. The sequence is that of Leucyl/phenylalanyl-tRNA--protein transferase from Hyphomonas neptunium (strain ATCC 15444).